Reading from the N-terminus, the 511-residue chain is Histidine ammonia-lyase 2 (511 aa).

A cross-link (5-imidazolinone (Ser-Gly)) is located at residues 144–146; sequence SSG. A 2,3-didehydroalanine (Ser) modification is found at Ser145.

It belongs to the PAL/histidase family. Post-translationally, contains an active site 4-methylidene-imidazol-5-one (MIO), which is formed autocatalytically by cyclization and dehydration of residues Ser-Ser-Gly.

Its subcellular location is the cytoplasm. It carries out the reaction L-histidine = trans-urocanate + NH4(+). It functions in the pathway amino-acid degradation; L-histidine degradation into L-glutamate; N-formimidoyl-L-glutamate from L-histidine: step 1/3. In Fusobacterium nucleatum subsp. nucleatum (strain ATCC 25586 / DSM 15643 / BCRC 10681 / CIP 101130 / JCM 8532 / KCTC 2640 / LMG 13131 / VPI 4355), this protein is Histidine ammonia-lyase 2 (hutH2).